A 160-amino-acid chain; its full sequence is Glyoxalase domain-containing protein 5 (160 aa).

One can recognise a VOC domain in the interval 37–157 (RLDHIVMTVK…DRNLIEVSNY (121 aa)).

This sequence belongs to the glyoxalase I family.

The polypeptide is Glyoxalase domain-containing protein 5 (GLOD5) (Homo sapiens (Human)).